We begin with the raw amino-acid sequence, 47 residues long: Snake venom metalloproteinase jararafibrase-4 (47 aa).

Residues 6-47 enclose the Peptidase M12B domain; the sequence is RYIELFLVVDHGMFMKYNGNSDKIYYYIHQMVNIMKXAYXYL. E9 serves as a coordination point for Ca(2+).

Belongs to the venom metalloproteinase (M12B) family. Monomer. Zn(2+) serves as cofactor. Expressed by the venom gland.

The protein localises to the secreted. With respect to regulation, inhibited by 1,10-phenanthroline and EDTA. The metalloproteinase is a probable venom zinc protease that induces local hemorrhage in the skin of rats. Degrades type-IV collagen, gelatin, laminin and fibronectin. Has fibrinolytic activities. Has high hemagglutinating activity on red blood cells. Cleaves insulin B chain at 29-His-|-Leu-30, and 38-Ala-|-Leu-39 bonds. This chain is Snake venom metalloproteinase jararafibrase-4, found in Bothrops jararaca (Jararaca).